The chain runs to 198 residues: Recombination protein RecR (198 aa).

The segment at 57–72 (CRVCANIADENPCGIC) adopts a C4-type zinc-finger fold. In terms of domain architecture, Toprim spans 80–175 (GLICVVERPR…RVTRLAFGLP (96 aa)).

The protein belongs to the RecR family.

May play a role in DNA repair. It seems to be involved in an RecBC-independent recombinational process of DNA repair. It may act with RecF and RecO. This chain is Recombination protein RecR, found in Desulforudis audaxviator (strain MP104C).